The sequence spans 933 residues: 2-oxoglutarate dehydrogenase E1 component (933 aa).

This sequence belongs to the alpha-ketoglutarate dehydrogenase family. As to quaternary structure, homodimer. Part of the 2-oxoglutarate dehydrogenase (OGDH) complex composed of E1 (2-oxoglutarate dehydrogenase), E2 (dihydrolipoamide succinyltransferase) and E3 (dihydrolipoamide dehydrogenase); the complex contains multiple copies of the three enzymatic components (E1, E2 and E3). It depends on thiamine diphosphate as a cofactor.

It carries out the reaction N(6)-[(R)-lipoyl]-L-lysyl-[protein] + 2-oxoglutarate + H(+) = N(6)-[(R)-S(8)-succinyldihydrolipoyl]-L-lysyl-[protein] + CO2. In terms of biological role, E1 component of the 2-oxoglutarate dehydrogenase (OGDH) complex which catalyzes the decarboxylation of 2-oxoglutarate, the first step in the conversion of 2-oxoglutarate to succinyl-CoA and CO(2). The chain is 2-oxoglutarate dehydrogenase E1 component from Staphylococcus saprophyticus subsp. saprophyticus (strain ATCC 15305 / DSM 20229 / NCIMB 8711 / NCTC 7292 / S-41).